The following is a 340-amino-acid chain: Leucine-rich repeat-containing protein 23 (340 aa).

A compositionally biased stretch (acidic residues) spans 1 to 27; that stretch reads MSDEDDVDDVDAEQDEVESDKEIEEWE. The disordered stretch occupies residues 1-38; that stretch reads MSDEDDVDDVDAEQDEVESDKEIEEWEDYRKETEEASE. LRR repeat units follow at residues 89–110, 111–134, 177–197, 198–219, 220–241, and 243–264; these read HLRYVDISENHITDISPLNSLT, HLLWLKADGNQLRSARMNELPYLQ, SLHTLELRGNQLESTKGIYLP, KLKNLYLAQNLLKKVEGLENLS, NLTTLHLRDNQIETLNGFSQEM, and SLQYLNLRSNMISDLAELAKLR. Residues 205–340 form an interaction with RSPH9 region; sequence AQNLLKKVEG…QDMEPYLPPV (136 aa). In terms of domain architecture, LRRCT spans 277–315; the sequence is NPCADETDYRQEALVQMAHLERLDKEFYEDDDRAEAEEI. The stretch at 305–328 forms a coiled coil; that stretch reads EDDDRAEAEEIRQRLKEEQDQDLD. A disordered region spans residues 317 to 340; it reads QRLKEEQDQDLDPDQDMEPYLPPV. Acidic residues predominate over residues 323–333; the sequence is QDQDLDPDQDM.

As to quaternary structure, component of the axonemal radial spoke complex. Interacts with RSPH3A and RSPH3B. Interacts with RSPH9. In terms of tissue distribution, expressed in the testis (at protein level).

The protein localises to the cytoplasm. The protein resides in the cytoskeleton. It localises to the flagellum axoneme. Essential for sperm motility and male fertility. Plays an important role in the proper assembly of the third radial spoke (RS3) head and the bridge structure between RS2 and RS3 in the sperm flagella. The chain is Leucine-rich repeat-containing protein 23 (Lrrc23) from Mus musculus (Mouse).